Here is a 357-residue protein sequence, read N- to C-terminus: MTEQMLDYFIVGAGLGGVAFAEVALQHQKSIFVFAGDKPPSSVAAAGVYNAVILKRFTLVSQAQEQINLLKVFYPEIEKRIQKNIIFDLPTYRRLASVEEQNNFIVASDRPLFQLFLSPKIISDKFKAVISPFGFGLMKQTGYVDTKLLLQSYRNYLQQNGCISAETFNYAELIIHPDFVEYKGQKAKQIIFAEGFQMKHNPFFKDLPLEGAKGELLVIRSENLDVNVLLKAGVFVLPIGNDLYKVGATYNWTDKTNKPTQSAKDELISELKELISCDFEVVEHLAGIRPTVKDRKPLVGRHPFHKNIYLLNGLGTRGVMLAPYLSYKLFDFIESDLPLDSSISIERYYNSITSSNK.

Positions 13, 14, 42, 47, 289, 315, and 318 each coordinate FAD. Arg289 lines the D-proline pocket. Residue Arg289 participates in D-serine binding.

Belongs to the DAMOX/DASOX family. The cofactor is FAD.

It is found in the cytoplasm. The protein resides in the secreted. Its subcellular location is the cell wall. It catalyses the reaction a D-alpha-amino acid + O2 + H2O = a 2-oxocarboxylate + H2O2 + NH4(+). It carries out the reaction D-phenylalanine + O2 + H2O = 3-phenylpyruvate + H2O2 + NH4(+). The enzyme catalyses D-lysine + O2 + H2O = 6-amino-2-oxohexanoate + H2O2 + NH4(+). The catalysed reaction is D-methionine + O2 + H2O = 4-methylsulfanyl-2-oxobutanoate + H2O2 + NH4(+). It catalyses the reaction D-arginine + O2 + H2O = 5-guanidino-2-oxopentanoate + H2O2 + NH4(+). It carries out the reaction D-ornithine + O2 + H2O = 5-amino-2-oxopentanoate + H2O2 + NH4(+). The enzyme catalyses D-leucine + O2 + H2O = 4-methyl-2-oxopentanoate + H2O2 + NH4(+). The catalysed reaction is D-histidine + O2 + H2O = 3-(imidazol-5-yl)pyruvate + H2O2 + NH4(+). With respect to regulation, activated by manganese, copper, and iron ions. Inhibited by barium, aluminum, and zinc ions. Its function is as follows. Catalyzes the oxidative deamination of D-amino acids with broad substrate specificity. In Unknown prokaryotic organism, this protein is D-amino-acid oxidase.